Reading from the N-terminus, the 1030-residue chain is Beta-galactosidase (1030 aa).

2 residues coordinate substrate: N99 and D197. D197 contacts Na(+). E411, H413, and E456 together coordinate Mg(2+). Substrate contacts are provided by residues E456 and 532–535 (EYAH). The Proton donor role is filled by E456. Catalysis depends on E532, which acts as the Nucleophile. A Mg(2+)-binding site is contributed by N592. Na(+) contacts are provided by F596 and N599. Substrate is bound by residues N599 and W1004.

It belongs to the glycosyl hydrolase 2 family. As to quaternary structure, homotetramer. The cofactor is Mg(2+). Requires Na(+) as cofactor.

It catalyses the reaction Hydrolysis of terminal non-reducing beta-D-galactose residues in beta-D-galactosides.. In Photobacterium profundum (strain SS9), this protein is Beta-galactosidase.